Consider the following 266-residue polypeptide: MPQPVPTANRLLDLFSLKGKVVVVTGASGPRGMGIEAARGCAEMGADLAITYSSRKEGAEKNAEELTKEYGVKVKVYKVNQSDYNDVERFVNQVVSDFGKIDAFIANAGATANSGVVDGSASDWDHVIQVDLSGTAYCAKAVGAHFKKQGHGSLVITASMSGHVANYPQEQTSYNVAKAGCIHLARSLANEWRDFARVNSISPGYIDTGLSDFIDEKTQELWRSMIPMGRNGDAKELKGAYVYLVSDASSYTTGADIVIDGGYTTR.

NADP(+)-binding residues include serine 53, asparagine 107, and lysine 140. Serine 159 acts as the Proton donor in catalysis. Tyrosine 174, lysine 178, isoleucine 206, and threonine 208 together coordinate NADP(+). Tyrosine 174 functions as the Proton acceptor in the catalytic mechanism. Lysine 178 serves as the catalytic Lowers pKa of active site Tyr.

This sequence belongs to the short-chain dehydrogenases/reductases (SDR) family. In terms of assembly, homotetramer.

The enzyme catalyses D-mannitol + NADP(+) = D-fructose + NADPH + H(+). Functionally, D-mannitol 2-dehydrogenase which is not necessary for D-mannitol catabolism. D-mannitol metabolism occurs via at least two different routes involving mannitol dehydrogenase (MDH) or mannitol 1-phosphate dehydrogenase, and the exact physiological role of mannitol dehydrogenases remains unclear. This chain is NADP-dependent mannitol dehydrogenase, found in Hypocrea jecorina (strain ATCC 56765 / BCRC 32924 / NRRL 11460 / Rut C-30) (Trichoderma reesei).